The sequence spans 129 residues: MEFRVVISDPKTGRAYQKVVEGANANRLIGKQIGDVISGTIVDLPPDYELKITGGTDRDGFPMRPDLPGTARRRLLLSGGVGFRPKEKGLRKRKGVRGRVISKDILQINTVVVKHGKVPLEEIFKQKEE.

This sequence belongs to the eukaryotic ribosomal protein eS6 family.

This Archaeoglobus fulgidus (strain ATCC 49558 / DSM 4304 / JCM 9628 / NBRC 100126 / VC-16) protein is Small ribosomal subunit protein eS6.